Reading from the N-terminus, the 559-residue chain is MKPSHSDTPLMMPSVMKCGYLATAGLIGICTHLSYFRYGEHHLYPWRYVRFHLCLTMGVAALLYAKKPPQYTLCSMDLVKDVSLLMATYLVGLFASLLLYRTLFHPLRQIRGPWAAKISSFWLSFRLRRGPSFRILHELHEEYGPVVRVGPSEVSIIHPEAVRMIYGPNSRCSKNTFYDNGHPMMSLHSYRDRIAHDQRRRVWSAGFGDRALRGYEQRMRVYRQKLFQRLEARAVAESAINISQWFNFYSYDTMGDLAFARSFDMLDASRNHWAVDMLMHGMIGYRYLFPSWFFRLLATMPSLSSDWHKFIGFATDTMLRRVGEQVDVPDIFASLLAPLNGREPTEDERNMLMGDAMLIITAGSDTTATSLTSIVYELARHLDEVDKLRAELDPIEADSDGEYQHDTLAKLPHLNGFINETLRLHPPIPGVIPRKTPPEGIHVKDVFIPGNMTVFSPQWSMGRSEAAYIDPEIFNPERWYKHMDLVKDPSAFAPFSIGPYSCIGKPLALMNIRTTVARLIMSFDVRFPEGEDGIRWMDAADEHFAMGIHQMPVVLTRRH.

A run of 3 helical transmembrane segments spans residues 13 to 35 (PSVM…HLSY), 48 to 65 (YVRF…LLYA), and 82 to 104 (VSLL…RTLF). Cys502 contacts heme.

It belongs to the cytochrome P450 family. Heme is required as a cofactor.

It localises to the membrane. It carries out the reaction tryprostatin B + reduced [NADPH--hemoprotein reductase] + O2 = 6-hydroxytryprostatin B + oxidized [NADPH--hemoprotein reductase] + H2O + H(+). It functions in the pathway mycotoxin biosynthesis. In terms of biological role, cytochrome P450 monooxygenase; part of the gene cluster that mediates the biosynthesis of fumitremorgins, indole alkaloids that carry not only intriguing chemical structures, but also interesting biological and pharmacological activities. The biosynthesis of fumitremorgin-type alkaloids begins by condensation of the two amino acids L-tryptophan and L-proline to brevianamide F, catalyzed by the non-ribosomal peptide synthetase ftmA. Brevianamide F is then prenylated by the prenyltransferase ftmPT1/ftmB in the presence of dimethylallyl diphosphate, resulting in the formation of tryprostatin B. The three cytochrome P450 monooxygenases, ftmP450-1/ftmC, ftmP450-2/ftmE and ftmP450-3/FtmG, are responsible for the conversion of tryprostatin B to 6-hydroxytryprostatin B, tryprostatin A to fumitremorgin C and fumitremorgin C to 12,13-dihydroxyfumitremorgin C, respectively. The putative methyltransferase ftmMT/ftmD is expected for the conversion of 6-hydroxytryprostatin B to tryprostatin A. FtmPT2/FtmH catalyzes the prenylation of 12,13-dihydroxyfumitre-morgin C in the presence of dimethylallyl diphosphate, resulting in the formation of fumitremorgin B. Fumitremorgin B is further converted to verruculogen by ftmOx1/ftmF via the insertion of an endoperoxide bond between the two prenyl moieties. In some fungal species, verruculogen is further converted to fumitremorgin A, but the enzymes involved in this step have not been identified yet. This chain is Tryprostatin B 6-hydroxylase, found in Aspergillus fumigatus (Neosartorya fumigata).